The primary structure comprises 70 residues: Testis-expressed protein 53 (70 aa).

Expressed in Testis.

The polypeptide is Testis-expressed protein 53 (Homo sapiens (Human)).